Reading from the N-terminus, the 292-residue chain is 11-beta-hydroxysteroid dehydrogenase 1 (292 aa).

Residues 2-7 lie on the Cytoplasmic side of the membrane; the sequence is HFMKKY. A helical; Signal-anchor for type II membrane protein membrane pass occupies residues 8–24; that stretch reads LLPILVLFLAYYYYSTK. Over 25–292 the chain is Lumenal; it reads EEFRPEMLQG…SFTFDKLISS (268 aa). Residues 41-67, 92-93, and 119-121 contribute to the NADP(+) site; these read GASK…TARS, TM, and NHI. N162 carries an N-linked (GlcNAc...) asparagine glycan. S170 contributes to the substrate binding site. The Proton acceptor role is filled by Y183. 183-187 lines the NADP(+) pocket; it reads YSASK. A glycan (N-linked (GlcNAc...) asparagine) is linked at N207. Residue 218–222 coordinates NADP(+); sequence INTET.

It belongs to the short-chain dehydrogenases/reductases (SDR) family. As to quaternary structure, homodimer. In terms of tissue distribution, detected in adrenal gland, liver, kidney, testis, and at lower levels in brain and lung (at protein level).

The protein localises to the endoplasmic reticulum membrane. The catalysed reaction is an 11beta-hydroxysteroid + NADP(+) = an 11-oxosteroid + NADPH + H(+). It carries out the reaction corticosterone + NADP(+) = 11-dehydrocorticosterone + NADPH + H(+). The enzyme catalyses a 7beta-hydroxysteroid + NADP(+) = a 7-oxosteroid + NADPH + H(+). It catalyses the reaction 7-oxocholesterol + NADPH + H(+) = 7beta-hydroxycholesterol + NADP(+). The catalysed reaction is 7-oxocholesterol + NADPH + H(+) = 7alpha-hydroxycholesterol + NADP(+). It carries out the reaction chenodeoxycholate + NADP(+) = 7-oxolithocholate + NADPH + H(+). The enzyme catalyses 7-oxolithocholate + NADPH + H(+) = ursodeoxycholate + NADP(+). It catalyses the reaction glycochenodeoxycholate + NADP(+) = 7-oxoglycolithocholate + NADPH + H(+). The catalysed reaction is taurochenodeoxycholate + NADP(+) = 7-oxotaurolithocholate + NADPH + H(+). It carries out the reaction tauroursodeoxycholate + NADP(+) = 7-oxotaurolithocholate + NADPH + H(+). The enzyme catalyses glycoursodeoxycholate + NADP(+) = 7-oxoglycolithocholate + NADPH + H(+). It catalyses the reaction 7-oxopregnenolone + NADPH + H(+) = 7beta-hydroxypregnenolone + NADP(+). The catalysed reaction is 3beta,7alpha-dihydroxyandrost-5-en-17-one + NADP(+) = 3beta-hydroxy-5-androstene-7,17-dione + NADPH + H(+). It carries out the reaction 3beta-hydroxy-5-androstene-7,17-dione + NADPH + H(+) = 3beta,7beta-dihydroxyandrost-5-en-17-one + NADP(+). The enzyme catalyses 3beta-hydroxy-5alpha-androstane-7,17-dione + NADPH + H(+) = 3beta,7beta-dihydroxy-5alpha-androstan-17-one + NADP(+). It functions in the pathway steroid metabolism. Controls the reversible conversion of biologically active glucocorticoids such as 11-dehydrocorticosterone to corticosterone in the presence of NADP(H). Participates in the corticosteroid receptor-mediated anti-inflammatory response, as well as metabolic and homeostatic processes. Bidirectional in vitro, predominantly functions as a reductase in vivo, thereby increasing the concentration of active glucocorticoids. It has broad substrate specificity, besides glucocorticoids, it accepts other steroid and sterol substrates. Interconverts 7-oxo- and 7-hydroxy-neurosteroids such as 7-oxopregnenolone and 7beta-hydroxypregnenolone, 7-oxodehydroepiandrosterone (3beta-hydroxy-5-androstene-7,17-dione) and 7beta-hydroxydehydroepiandrosterone (3beta,7beta-dihydroxyandrost-5-en-17-one), among others. Catalyzes reversibly the conversion of the major dietary oxysterol, 7-ketocholesterol (7-oxocholesterol), into the more polar 7-beta-hydroxycholesterol and 7-alpha-hhydroxycholesterol metabolites. 7-oxocholesterol is one of the most important oxysterols, it participates in several events such as induction of apoptosis, accumulation in atherosclerotic lesions, lipid peroxidation, and induction of foam cell formation. Mediates the 7-oxo reduction of 7-oxolithocholate mainly to chenodeoxycholate, and to a lesser extent to ursodeoxycholate, both in its free form and when conjugated to glycine or taurine, providing a link between glucocorticoid activation and bile acid metabolism. Catalyzes the synthesis of 7-beta-25-dihydroxycholesterol from 7-oxo-25-hydroxycholesterol in vitro, which acts as a ligand for the G-protein-coupled receptor (GPCR) Epstein-Barr virus-induced gene 2 (EBI2) and may thereby regulate immune cell migration. The sequence is that of 11-beta-hydroxysteroid dehydrogenase 1 (HSD11B1) from Mesocricetus auratus (Golden hamster).